We begin with the raw amino-acid sequence, 241 residues long: DNA repair protein RecO (241 aa).

This sequence belongs to the RecO family.

Involved in DNA repair and RecF pathway recombination. The sequence is that of DNA repair protein RecO from Rickettsia bellii (strain OSU 85-389).